We begin with the raw amino-acid sequence, 159 residues long: Nucleotide-binding protein PSPPH_4093 (159 aa).

Belongs to the YajQ family.

In terms of biological role, nucleotide-binding protein. This chain is Nucleotide-binding protein PSPPH_4093, found in Pseudomonas savastanoi pv. phaseolicola (strain 1448A / Race 6) (Pseudomonas syringae pv. phaseolicola (strain 1448A / Race 6)).